Here is a 518-residue protein sequence, read N- to C-terminus: ESX-3 secretion system ATPase EccB3 (518 aa).

Residues 1-26 (MTGPVNPDDRRSFSSRTPVNENPDGV) are disordered. The helical transmembrane segment at 71 to 91 (VLTGALILVTGLVGCFIFSLF) threads the bilayer.

Belongs to the EccB family. As to quaternary structure, part of the ESX-3 / type VII secretion system (T7SS), which is composed of cytosolic and membrane components. The ESX-3 membrane complex is composed of EccB3, EccC3, EccD3 and EccE3.

Its subcellular location is the cell inner membrane. In terms of biological role, an ATPase. Part of the ESX-3 specialized secretion system, which is required for siderophore-mediated iron acquisition and for the secretion of EsxH and EsxG. This chain is ESX-3 secretion system ATPase EccB3, found in Mycolicibacterium smegmatis (strain ATCC 700084 / mc(2)155) (Mycobacterium smegmatis).